The sequence spans 1921 residues: Mediator of RNA polymerase II transcription subunit 13 (1921 aa).

Glycyl lysine isopeptide (Lys-Gly) (interchain with G-Cter in ubiquitin) cross-links involve residues lysine 220 and lysine 226. Disordered regions lie at residues 400 to 434 (YEKNGYNSSGSSRNSSISSTSSASSGSGWRMTSRT), 702 to 724 (TQVEGRKGRHDKLPTVISDNSST), and 1485 to 1528 (SPTF…GDVS). Positions 407–427 (SSGSSRNSSISSTSSASSGSG) are enriched in low complexity. Composition is skewed to polar residues over residues 1486-1496 (PTFTSLGSESS) and 1515-1527 (EGITSGSSSQGDV).

The protein belongs to the Mediator complex subunit 13 family. In terms of assembly, component of the Mediator complex. Interacts with CYCC1-2 (CDK8 homolog). Ubiquitous. Highest expression in the shoot apex.

The protein localises to the nucleus. In terms of biological role, component of the Mediator complex, a coactivator involved in the regulated transcription of nearly all RNA polymerase II-dependent genes. Mediator functions as a bridge to convey information from gene-specific regulatory proteins to the basal RNA polymerase II transcription machinery. The Mediator complex, having a compact conformation in its free form, is recruited to promoters by direct interactions with regulatory proteins and serves for the assembly of a functional preinitiation complex with RNA polymerase II and the general transcription factors. Acts closely together with MAB12. Involved in the regulation of embryo patterning and cotyledon organogenesis. May act through transient repression of specific genes such as the ones responsive to auxin. In Arabidopsis thaliana (Mouse-ear cress), this protein is Mediator of RNA polymerase II transcription subunit 13 (MED13).